Consider the following 569-residue polypeptide: Proline--tRNA ligase (569 aa).

Belongs to the class-II aminoacyl-tRNA synthetase family. ProS type 1 subfamily. As to quaternary structure, homodimer.

It localises to the cytoplasm. The enzyme catalyses tRNA(Pro) + L-proline + ATP = L-prolyl-tRNA(Pro) + AMP + diphosphate. Its function is as follows. Catalyzes the attachment of proline to tRNA(Pro) in a two-step reaction: proline is first activated by ATP to form Pro-AMP and then transferred to the acceptor end of tRNA(Pro). As ProRS can inadvertently accommodate and process non-cognate amino acids such as alanine and cysteine, to avoid such errors it has two additional distinct editing activities against alanine. One activity is designated as 'pretransfer' editing and involves the tRNA(Pro)-independent hydrolysis of activated Ala-AMP. The other activity is designated 'posttransfer' editing and involves deacylation of mischarged Ala-tRNA(Pro). The misacylated Cys-tRNA(Pro) is not edited by ProRS. In Latilactobacillus sakei subsp. sakei (strain 23K) (Lactobacillus sakei subsp. sakei), this protein is Proline--tRNA ligase.